Here is a 374-residue protein sequence, read N- to C-terminus: N5-carboxyaminoimidazole ribonucleotide synthase (374 aa).

ATP is bound by residues R108, K148, 153 to 159 (GYDGKGQ), 183 to 186 (EQFL), E191, H214, and 266 to 267 (NE). The 185-residue stretch at 112-296 (KQTLQKAGSK…QFDTHILAVT (185 aa)) folds into the ATP-grasp domain.

This sequence belongs to the PurK/PurT family. In terms of assembly, homodimer.

It carries out the reaction 5-amino-1-(5-phospho-beta-D-ribosyl)imidazole + hydrogencarbonate + ATP = 5-carboxyamino-1-(5-phospho-D-ribosyl)imidazole + ADP + phosphate + 2 H(+). The protein operates within purine metabolism; IMP biosynthesis via de novo pathway; 5-amino-1-(5-phospho-D-ribosyl)imidazole-4-carboxylate from 5-amino-1-(5-phospho-D-ribosyl)imidazole (N5-CAIR route): step 1/2. In terms of biological role, catalyzes the ATP-dependent conversion of 5-aminoimidazole ribonucleotide (AIR) and HCO(3)(-) to N5-carboxyaminoimidazole ribonucleotide (N5-CAIR). This Staphylococcus haemolyticus (strain JCSC1435) protein is N5-carboxyaminoimidazole ribonucleotide synthase.